The following is a 158-amino-acid chain: MSETMQSLDQLSALKTTQPDAPTYTKKVDKFGRAYATGKRKDAVARVWIKPGAGKVIVNSREVEVYFARPVLRMMIQQPLVAAARAGQYDVICTVAGGGLSGQAGAVRHGISKALTNFEPELRGVLKKGGFLTRDSRVVERKKYGKAKARRSFQFSKR.

This sequence belongs to the universal ribosomal protein uS9 family.

This chain is Small ribosomal subunit protein uS9, found in Rhodopseudomonas palustris (strain HaA2).